A 392-amino-acid polypeptide reads, in one-letter code: MIIKLIFLICFKIVLSIDNKTKFNETLILDNIDYWVKFNDTITLDSNITSEIEAVSWNFYNNTFNLLAICGKASNFCSCSNYSTSFFNITNNCSLTIFLIDETLFNTTYQIVYSTNIINYKINLLIPVTPPIISYNCANCSINCKKSNGTNTNIFLSINDTIVTYTNESILNYDYNCSILNNNFTVTCIINNTISTSNTTEFINCTNILLSSYLDFFQVTSYIFYMIIFIVTGITVSILISIITFLFIRKRKHVEEIESPPPESNEEEQQCHHDTTSIHEPSPREPLLPKPYSRYQYNTPIYYMRPSTQQLFKSYSLPKPCPPPKPCPPPKPCPPPKPCPPSKPCPPPEPYSPPKPCPPPKPYPSLPSIPLPPDIPPLSTQNISLIHVDRII.

Residues 1 to 16 form the signal peptide; that stretch reads MIIKLIFLICFKIVLS. At 17–222 the chain is on the extracellular side; the sequence is IDNKTKFNET…YLDFFQVTSY (206 aa). Asn39, Asn88, Asn92, Asn106, Asn148, Asn159, Asn183, Asn191, Asn198, and Asn204 each carry an N-linked (GlcNAc...) asparagine; by host glycan. 2 disulfides stabilise this stretch: Cys137–Cys205 and Cys144–Cys188. Residues 223-243 traverse the membrane as a helical segment; sequence IFYMIIFIVTGITVSILISII. At 244–392 the chain is on the cytoplasmic side; that stretch reads TFLFIRKRKH…ISLIHVDRII (149 aa). The tract at residues 258–290 is disordered; sequence ESPPPESNEEEQQCHHDTTSIHEPSPREPLLPK. Residues 269-283 are compositionally biased toward basic and acidic residues; it reads QQCHHDTTSIHEPSP. A run of 5 repeats spans residues 319–324, 325–330, 331–336, 337–342, and 343–348. A 5 X 6 AA tandem repeats of K-P-C-[PRS]-[P]-[PS] region spans residues 319-348; the sequence is KPCPPPKPCPPPKPCPPPKPCPPSKPCPPP. A disordered region spans residues 328–357; that stretch reads PPPKPCPPPKPCPPSKPCPPPEPYSPPKPC.

Belongs to the asfivirus CD2 homolog protein family. Both glycosylated and nonglycosylated forms interact (via C-terminus) with the host AP-1 complex. Post-translationally, cleaved into two fragments of 63 kDa and 26 kDa containing respectively the glycosylated N-terminus and the nonglycosylated C-terminus. A full-length 89-kDa glycosylated form also exists.

The protein resides in the host cell membrane. It localises to the virion membrane. It is found in the host Golgi apparatus. May play an immunosuppressive role by inhibiting lymphocyte proliferation and subsequently facilitating viral replication and generalization of infection. Responsible for viral hemadsorption, which may help viral spread. Increases virus replication in the tick vector at the step of virus uptake or replication in the tick gut. May play a role in the host Golgi reorganization to yield viral factories. May play a role in host cell penetration. The chain is CD2 homolog from Ornithodoros (relapsing fever ticks).